Here is a 371-residue protein sequence, read N- to C-terminus: Queuine tRNA-ribosyltransferase (371 aa).

The active-site Proton acceptor is the Asp90. Substrate-binding positions include 90–94 (DSGGF), Asp144, Gln189, and Gly215. Residues 246–252 (GVGTPEN) are RNA binding. Asp265 functions as the Nucleophile in the catalytic mechanism. The segment at 270–274 (TRNAR) is RNA binding; important for wobble base 34 recognition. Zn(2+)-binding residues include Cys303, Cys305, Cys308, and His334.

It belongs to the queuine tRNA-ribosyltransferase family. Homodimer. Within each dimer, one monomer is responsible for RNA recognition and catalysis, while the other monomer binds to the replacement base PreQ1. It depends on Zn(2+) as a cofactor.

The catalysed reaction is 7-aminomethyl-7-carbaguanine + guanosine(34) in tRNA = 7-aminomethyl-7-carbaguanosine(34) in tRNA + guanine. Its pathway is tRNA modification; tRNA-queuosine biosynthesis. Its function is as follows. Catalyzes the base-exchange of a guanine (G) residue with the queuine precursor 7-aminomethyl-7-deazaguanine (PreQ1) at position 34 (anticodon wobble position) in tRNAs with GU(N) anticodons (tRNA-Asp, -Asn, -His and -Tyr). Catalysis occurs through a double-displacement mechanism. The nucleophile active site attacks the C1' of nucleotide 34 to detach the guanine base from the RNA, forming a covalent enzyme-RNA intermediate. The proton acceptor active site deprotonates the incoming PreQ1, allowing a nucleophilic attack on the C1' of the ribose to form the product. After dissociation, two additional enzymatic reactions on the tRNA convert PreQ1 to queuine (Q), resulting in the hypermodified nucleoside queuosine (7-(((4,5-cis-dihydroxy-2-cyclopenten-1-yl)amino)methyl)-7-deazaguanosine). The sequence is that of Queuine tRNA-ribosyltransferase from Helicobacter pylori (strain Shi470).